Reading from the N-terminus, the 620-residue chain is tRNA uridine 5-carboxymethylaminomethyl modification enzyme MnmG (620 aa).

FAD contacts are provided by residues 13-18 (GGGHAG), valine 125, and serine 182. 280-294 (GPRYCPSVEDKIVKF) serves as a coordination point for NAD(+). Asparagine 377 is an FAD binding site.

Belongs to the MnmG family. As to quaternary structure, homodimer. Heterotetramer of two MnmE and two MnmG subunits. The cofactor is FAD.

The protein localises to the cytoplasm. NAD-binding protein involved in the addition of a carboxymethylaminomethyl (cmnm) group at the wobble position (U34) of certain tRNAs, forming tRNA-cmnm(5)s(2)U34. The sequence is that of tRNA uridine 5-carboxymethylaminomethyl modification enzyme MnmG from Sulfurihydrogenibium sp. (strain YO3AOP1).